A 340-amino-acid chain; its full sequence is Lipopolysaccharide core biosynthesis glycosyltransferase LpsE (340 aa).

The protein belongs to the glycosyltransferase group 1 family. Glycosyltransferase 4 subfamily.

Its pathway is bacterial outer membrane biogenesis; LPS core biosynthesis. The polypeptide is Lipopolysaccharide core biosynthesis glycosyltransferase LpsE (lpsE) (Rhizobium meliloti (strain 1021) (Ensifer meliloti)).